A 272-amino-acid chain; its full sequence is Short-chain dehydrogenase/reductase iacC (272 aa).

Residues isoleucine 13, aspartate 59, and asparagine 88 each contribute to the NADP(+) site. Catalysis depends on proton donor residues serine 150 and tyrosine 169. Positions 169, 173, and 202 each coordinate NADP(+). Lysine 173 acts as the Lowers pKa of active site Tyr in catalysis.

It belongs to the short-chain dehydrogenases/reductases (SDR) family.

Its pathway is secondary metabolite biosynthesis. Its function is as follows. Short-chain dehydrogenase/reductase; part of the gene cluster that mediates the biosynthesis of iso-A82775C, a enylepoxycyclohexane and biosynthetic precursor of the chloropestolide anticancer natural products. Within the cluster, the prenyltransferase iacE prenylates siccayne to generate pestalodiol E, using dimethylallyl diphosphate (DMAPP) as cosubstrate. The probable oxidoreductase iacF is then involved in the epoxidation of pestalodiol F to pestalodiol F, which is further converted to pestalofone A by the short-chain dehydrogenase/reductase iacG. Iso-A82775C is subsequently generated from pestalofone A by the short-chain dehydrogenase/reductase iacC. Iso-A82775C is further condensed with maldoxin via a Diels-Alder reaction to produce the anticancer natural products chloropestolides A to E. This is Short-chain dehydrogenase/reductase iacC from Pestalotiopsis fici (strain W106-1 / CGMCC3.15140).